The chain runs to 405 residues: Probable tRNA sulfurtransferase (405 aa).

The THUMP domain occupies glutamate 60–leucine 165. ATP contacts are provided by residues methionine 183–leucine 184, histidine 208–phenylalanine 209, arginine 265, glycine 287, and glutamine 296.

Belongs to the ThiI family.

The protein localises to the cytoplasm. The enzyme catalyses [ThiI sulfur-carrier protein]-S-sulfanyl-L-cysteine + a uridine in tRNA + 2 reduced [2Fe-2S]-[ferredoxin] + ATP + H(+) = [ThiI sulfur-carrier protein]-L-cysteine + a 4-thiouridine in tRNA + 2 oxidized [2Fe-2S]-[ferredoxin] + AMP + diphosphate. It carries out the reaction [ThiS sulfur-carrier protein]-C-terminal Gly-Gly-AMP + S-sulfanyl-L-cysteinyl-[cysteine desulfurase] + AH2 = [ThiS sulfur-carrier protein]-C-terminal-Gly-aminoethanethioate + L-cysteinyl-[cysteine desulfurase] + A + AMP + 2 H(+). The protein operates within cofactor biosynthesis; thiamine diphosphate biosynthesis. In terms of biological role, catalyzes the ATP-dependent transfer of a sulfur to tRNA to produce 4-thiouridine in position 8 of tRNAs, which functions as a near-UV photosensor. Also catalyzes the transfer of sulfur to the sulfur carrier protein ThiS, forming ThiS-thiocarboxylate. This is a step in the synthesis of thiazole, in the thiamine biosynthesis pathway. The sulfur is donated as persulfide by IscS. In Lactobacillus johnsonii (strain CNCM I-12250 / La1 / NCC 533), this protein is Probable tRNA sulfurtransferase.